A 118-amino-acid chain; its full sequence is Large ribosomal subunit protein bL20 (118 aa).

The protein belongs to the bacterial ribosomal protein bL20 family.

Functionally, binds directly to 23S ribosomal RNA and is necessary for the in vitro assembly process of the 50S ribosomal subunit. It is not involved in the protein synthesizing functions of that subunit. The chain is Large ribosomal subunit protein bL20 from Hydrogenovibrio crunogenus (strain DSM 25203 / XCL-2) (Thiomicrospira crunogena).